The primary structure comprises 526 residues: Phosphoenolpyruvate carboxykinase (ATP) (526 aa).

Arginine 55, tyrosine 190, and lysine 196 together coordinate substrate. ATP contacts are provided by residues lysine 196, histidine 215, and glycine 231–threonine 239. Residues lysine 196 and histidine 215 each contribute to the Mn(2+) site. Position 252 (aspartate 252) interacts with Mn(2+). ATP-binding residues include glutamate 280, arginine 317, and threonine 442. Arginine 317 is a binding site for substrate.

It belongs to the phosphoenolpyruvate carboxykinase (ATP) family. Mn(2+) is required as a cofactor.

It is found in the cytoplasm. It catalyses the reaction oxaloacetate + ATP = phosphoenolpyruvate + ADP + CO2. It participates in carbohydrate biosynthesis; gluconeogenesis. Involved in the gluconeogenesis. Catalyzes the conversion of oxaloacetate (OAA) to phosphoenolpyruvate (PEP) through direct phosphoryl transfer between the nucleoside triphosphate and OAA. The chain is Phosphoenolpyruvate carboxykinase (ATP) from Alkaliphilus oremlandii (strain OhILAs) (Clostridium oremlandii (strain OhILAs)).